Reading from the N-terminus, the 502-residue chain is uncharacterized protein (502 aa).

Low complexity-rich tracts occupy residues 1–10 (MQSTTNNNTN), 28–47 (SNRS…NNLS), and 155–171 (NTED…SVNS). 4 disordered regions span residues 1–57 (MQST…VISY), 155–181 (NTED…LSAR), 212–362 (SLGN…TDKF), and 438–487 (TIDQ…TSNL). Polar residues predominate over residues 212–230 (SLGNSERNSPDRPSTQGDS). Composition is skewed to low complexity over residues 242-290 (RNAS…SSRN) and 309-327 (SNKN…TSIK). Residues 339 to 348 (QTNKSKNQRG) are compositionally biased toward polar residues. Low complexity predominate over residues 446–460 (TSDKNNSTKSNTKYN). Residues 470–487 (SYGTSKRSHNRSSNTSNL) are compositionally biased toward polar residues.

Its subcellular location is the virion. This is an uncharacterized protein from Acanthamoeba polyphaga (Amoeba).